A 431-amino-acid polypeptide reads, in one-letter code: MTLYHFVGIKGSGMSALAHILFDMGETVQGSDIEKEFFTEKSLREKGITILPFNQENIKEGMTIIAGNAFNDDHEEIVRAHELGLTVTRYHDFLGNFMSQYTSVAVTGSHGKTSTTGLLSHVMNGDKKTSYLIGDGTGMGMPGSEYFAFEACEYRRHFLSYSPDYAIITNIDFDHPDYFASMSDVFNAFQEMTKKVKKAIVACGDDENLRDIEADIPIYYYGFKEDNKVVAKNMKTTPQGTQFEVYIDGELFDTFVTPMYGDHQVLNALAVITICHLEGLDNAAVKHALSTFGGVKRRFSEKIQDEQILIDDYAHHPTEIKATLQSAHLKYPERKVIAIFQPHTFSRTSAFLEDFANSLKLADKVYLCDIFGSVREDSGELTIGDLQILIPGAELINESNVNLLKQYKDAVVIFMGAGDIQKIQVAYENLK.

108-114 (GSHGKTS) provides a ligand contact to ATP.

It belongs to the MurCDEF family.

The protein resides in the cytoplasm. The enzyme catalyses UDP-N-acetyl-alpha-D-muramate + L-alanine + ATP = UDP-N-acetyl-alpha-D-muramoyl-L-alanine + ADP + phosphate + H(+). The protein operates within cell wall biogenesis; peptidoglycan biosynthesis. Functionally, cell wall formation. The protein is UDP-N-acetylmuramate--L-alanine ligase of Macrococcus caseolyticus (strain JCSC5402) (Macrococcoides caseolyticum).